The sequence spans 1606 residues: E3 ubiquitin-protein ligase HECW1 (1606 aa).

The C2 domain maps to 182–318; sequence SAAPIFKSIG…LERHAIGDRV (137 aa). Disordered regions lie at residues 349–418, 459–538, 566–672, and 730–815; these read DDEE…PAEE, AEQL…CSLP, LLHS…SCEG, and STVF…SQLP. The span at 354–373 shows a compositional bias: polar residues; sequence SLSTEPESAQIQDSPMNNLM. Residues 380-392 show a composition bias toward basic and acidic residues; it reads PRSEAPESSESWK. 2 stretches are compositionally biased toward acidic residues: residues 500 to 511 and 579 to 588; these read EEEEKEQEEEGD and AEEEDGAEEE. Residues 589–600 show a composition bias toward basic and acidic residues; that stretch reads STLKDSSEKDGL. The span at 612–621 shows a compositional bias: acidic residues; the sequence is ALEEDREEPE. Composition is skewed to polar residues over residues 651-663, 751-765, and 806-815; these read HPSTGSESDSSPR, DSMQSPELDPESTNG, and HNSQPVSQLP. Residues 829 to 862 enclose the WW 1 domain; that stretch reads EPLPPNWEARIDSHGRVFYVDHVNRTTTWQRPTA. Residues 870 to 901 are a coiled coil; that stretch reads RRSGSIQQMEQLNRRYQNIQRTIATERSEEDS. Residues Ser874, Ser937, and Ser939 each carry the phosphoserine modification. Positions 894–938 are disordered; that stretch reads TERSEEDSGSQSCEQAPAGGGGGGGSDSEAESSQSSLDLRREGSL. The 34-residue stretch at 1018–1051 folds into the WW 2 domain; that stretch reads LELPRGWEIKTDQQGKSFFVDHNSRATTFIDPRI. Residues 1271–1606 form the HECT domain; the sequence is SRKELQRNKL…VEETSTFGLE (336 aa). The active-site Glycyl thioester intermediate is Cys1574.

Interacts with DVL1 and SSR3. Also interacts with mutant SOD1. In terms of tissue distribution, predominantly expressed in neurons of adult and fetal brain. Weakly expressed in the kidney.

It localises to the cytoplasm. The enzyme catalyses S-ubiquitinyl-[E2 ubiquitin-conjugating enzyme]-L-cysteine + [acceptor protein]-L-lysine = [E2 ubiquitin-conjugating enzyme]-L-cysteine + N(6)-ubiquitinyl-[acceptor protein]-L-lysine.. The protein operates within protein modification; protein ubiquitination. In terms of biological role, E3 ubiquitin-protein ligase that mediates ubiquitination and subsequent degradation of DVL1. Also targets the mutant SOD1 protein involved in familial amyotrophic lateral sclerosis (FALS). Forms cytotoxic aggregates with DVL1, SSR3 and mutant SOD1 that lead to motor neuron death in FALS. In Homo sapiens (Human), this protein is E3 ubiquitin-protein ligase HECW1 (HECW1).